We begin with the raw amino-acid sequence, 74 residues long: NADH dehydrogenase [ubiquinone] 1 alpha subcomplex assembly factor 8 (74 aa).

The CHCH domain maps to 22–69 (LAACGAEASAYGKCVQASTAPGGRLSKDLCVREFEALRSCFAAAAKKT). 2 short sequence motifs (cx9C motif) span residues 25–35 (CGAEASAYGKC) and 51–61 (CVREFEALRSC). 2 disulfide bridges follow: Cys-25–Cys-61 and Cys-35–Cys-51.

Interacts with NDUFAF5.

It is found in the mitochondrion. Functionally, involved in the assembly of mitochondrial NADH:ubiquinone oxidoreductase complex (complex I, MT-ND1). Required to stabilize NDUFAF5. The sequence is that of NADH dehydrogenase [ubiquinone] 1 alpha subcomplex assembly factor 8 from Mus musculus (Mouse).